The sequence spans 216 residues: Protein-L-isoaspartate O-methyltransferase (216 aa).

Serine 61 is an active-site residue.

Belongs to the methyltransferase superfamily. L-isoaspartyl/D-aspartyl protein methyltransferase family.

It localises to the cytoplasm. It catalyses the reaction [protein]-L-isoaspartate + S-adenosyl-L-methionine = [protein]-L-isoaspartate alpha-methyl ester + S-adenosyl-L-homocysteine. In terms of biological role, catalyzes the methyl esterification of L-isoaspartyl residues in peptides and proteins that result from spontaneous decomposition of normal L-aspartyl and L-asparaginyl residues. It plays a role in the repair and/or degradation of damaged proteins. The sequence is that of Protein-L-isoaspartate O-methyltransferase from Dinoroseobacter shibae (strain DSM 16493 / NCIMB 14021 / DFL 12).